The chain runs to 307 residues: Agmatinase (307 aa).

Residues His128, Asp151, His153, Asp155, Asp232, and Asp234 each contribute to the Mn(2+) site.

The protein belongs to the arginase family. Agmatinase subfamily. Mn(2+) is required as a cofactor.

The enzyme catalyses agmatine + H2O = urea + putrescine. Its pathway is amine and polyamine biosynthesis; putrescine biosynthesis via agmatine pathway; putrescine from agmatine: step 1/1. Catalyzes the formation of putrescine from agmatine. The chain is Agmatinase from Photorhabdus laumondii subsp. laumondii (strain DSM 15139 / CIP 105565 / TT01) (Photorhabdus luminescens subsp. laumondii).